The chain runs to 609 residues: Pair-rule protein odd-paired (609 aa).

The disordered stretch occupies residues 20 to 41 (RMSPNTTASNSNAQQQQQQQLE). A compositionally biased stretch (polar residues) spans 22 to 32 (SPNTTASNSNA). The segment at 210 to 249 (MQCLWIDPDQPGLVPPGGRKTCNKVFHSMHEIVTHLTVEH) adopts a C2H2-type 1; atypical zinc-finger fold. 4 consecutive C2H2-type zinc fingers follow at residues 258–285 (HACF…IRVH), 291–315 (FACP…KRTH), 321–345 (FKCE…SHVH), and 351–375 (YNCR…MKVH). 2 disordered regions span residues 373 to 550 (KVHG…ASAS) and 583 to 609 (EAMN…ATAY). The segment covering 399 to 409 (IITGGAQTPPS) has biased composition (polar residues). Composition is skewed to low complexity over residues 414–434 (GSAG…IKSS) and 449–498 (HLGA…LTAH). Over residues 528–537 (SHHHHPHHHQ) the composition is skewed to basic residues. Over residues 538–550 (AAPSPGAAAASAS) the composition is skewed to low complexity. Basic residues predominate over residues 591-601 (FGHHHHHHHLM).

It belongs to the GLI C2H2-type zinc-finger protein family. Expressed throughout all segment primordia; expressed ubiquitously in the ectoderm and mesoderm precursors.

It localises to the nucleus. Its function is as follows. Transcription factor essential for parasegmental subdivision of the embryo. It is involved in the activation of wingless (wg) in odd parasegments. It is also required for the timely activation of wg in the remaining parasegments and for the timely activation of engrailed (en) in all parasegments. This is Pair-rule protein odd-paired (opa) from Drosophila melanogaster (Fruit fly).